We begin with the raw amino-acid sequence, 377 residues long: Unsaturated glucuronyl hydrolase (377 aa).

The Nucleophile role is filled by Asp-88. The active-site Proton donor is Asp-149.

This sequence belongs to the glycosyl hydrolase 88 family. In terms of assembly, monomer.

The protein localises to the cytoplasm. It carries out the reaction beta-D-Delta(4)-GlcA-(1-&gt;4)-beta-D-Glc-(1-&gt;4)-alpha-L-Rha-(1-&gt;3)-D-Glc + H2O = beta-D-Glc-(1-&gt;4)-alpha-L-Rha-(1-&gt;3)-D-Glc + 5-dehydro-4-deoxy-D-glucuronate. Its activity is regulated as follows. Partially inhibited by divalent metal ions such as calcium, copper, iron and mercury. Catalyzes the hydrolysis of oligosaccharides with unsaturated glucuronyl residues at the non-reducing terminal, to a sugar or an amino sugar, and an unsaturated D-glucuronic acid (GlcA), which is nonenzymatically converted immediately to alpha-keto acid. The sequence is that of Unsaturated glucuronyl hydrolase (ugl) from Bacillus sp. (strain GL1).